The chain runs to 67 residues: Large ribosomal subunit protein uL29 (67 aa).

This sequence belongs to the universal ribosomal protein uL29 family.

The polypeptide is Large ribosomal subunit protein uL29 (Staphylothermus marinus (strain ATCC 43588 / DSM 3639 / JCM 9404 / F1)).